The sequence spans 334 residues: 6-phosphogluconolactonase (334 aa).

This sequence belongs to the cycloisomerase 2 family.

The enzyme catalyses 6-phospho-D-glucono-1,5-lactone + H2O = 6-phospho-D-gluconate + H(+). Its pathway is carbohydrate degradation; pentose phosphate pathway; D-ribulose 5-phosphate from D-glucose 6-phosphate (oxidative stage): step 2/3. In terms of biological role, catalyzes the hydrolysis of 6-phosphogluconolactone to 6-phosphogluconate. The sequence is that of 6-phosphogluconolactonase from Buchnera aphidicola subsp. Acyrthosiphon pisum (strain APS) (Acyrthosiphon pisum symbiotic bacterium).